A 335-amino-acid polypeptide reads, in one-letter code: MNPLDLIAKRAYPYETEKRDKTYLALNENPFPFPEDLVDEVFRRLNSDALRIYYDSPDEELIEKILSYLDTDFLSKNNVSVGNGADEIIYVMMLMFDRSVFFPPTYSCYRIFAKAVGAKFLEVPLTKDLRIPEVNVGEGDVVFIPNPNNPTGHVFEREEIERILKTGAFVALDEAYYEFHGESYVDLLKKYENLAVIRTFSKAFSLAAQRVGYVVASEKFIDAYNRVRLPFNVSYVSQMFAKVALDHREIFEERTKFIVEERERMKSALREMGYRITDSRGNFVFVFMEKEEKERLLEHLRTKNVAVRSFREGVRITIGKREENDMILRELEVFK.

At Lys202 the chain carries N6-(pyridoxal phosphate)lysine.

This sequence belongs to the class-II pyridoxal-phosphate-dependent aminotransferase family. Histidinol-phosphate aminotransferase subfamily. As to quaternary structure, homodimer. Pyridoxal 5'-phosphate is required as a cofactor.

The catalysed reaction is L-histidinol phosphate + 2-oxoglutarate = 3-(imidazol-4-yl)-2-oxopropyl phosphate + L-glutamate. It functions in the pathway amino-acid biosynthesis; L-histidine biosynthesis; L-histidine from 5-phospho-alpha-D-ribose 1-diphosphate: step 7/9. The polypeptide is Histidinol-phosphate aminotransferase (Thermotoga sp. (strain RQ2)).